The primary structure comprises 399 residues: DJ-1 protein homolog F (399 aa).

2 consecutive PfpI endopeptidase domains span residues 7–199 (KSVL…ESLG) and 211–394 (TSLL…TALG).

Belongs to the peptidase C56 family. Homotrimer.

In terms of biological role, may be involved in oxidative stress response. This chain is DJ-1 protein homolog F (DJ1F), found in Arabidopsis thaliana (Mouse-ear cress).